The primary structure comprises 179 residues: Large ribosomal subunit protein uL6 (179 aa).

It belongs to the universal ribosomal protein uL6 family. In terms of assembly, part of the 50S ribosomal subunit.

Its function is as follows. This protein binds to the 23S rRNA, and is important in its secondary structure. It is located near the subunit interface in the base of the L7/L12 stalk, and near the tRNA binding site of the peptidyltransferase center. This is Large ribosomal subunit protein uL6 from Trichodesmium erythraeum (strain IMS101).